The primary structure comprises 146 residues: Putative esterase DR_2321 (146 aa).

It belongs to the thioesterase PaaI family.

The protein is Putative esterase DR_2321 of Deinococcus radiodurans (strain ATCC 13939 / DSM 20539 / JCM 16871 / CCUG 27074 / LMG 4051 / NBRC 15346 / NCIMB 9279 / VKM B-1422 / R1).